The sequence spans 317 residues: Probable cell division protein WhiA (317 aa).

The H-T-H motif DNA-binding region spans 281–314 (SLKELGKMLEPPVGKSGVNHRLRKIEKIAEELRK).

It belongs to the WhiA family.

In terms of biological role, involved in cell division and chromosome segregation. The sequence is that of Probable cell division protein WhiA from Clostridium acetobutylicum (strain ATCC 824 / DSM 792 / JCM 1419 / IAM 19013 / LMG 5710 / NBRC 13948 / NRRL B-527 / VKM B-1787 / 2291 / W).